Consider the following 291-residue polypeptide: Shikimate dehydrogenase (NADP(+)) (291 aa).

Shikimate is bound by residues 18–20 and threonine 70; that span reads SLS. Lysine 74 (proton acceptor) is an active-site residue. Shikimate contacts are provided by asparagine 95 and aspartate 110. NADP(+)-binding positions include 134–138 and valine 228; that span reads GAGGA. Residue tyrosine 230 coordinates shikimate. NADP(+) is bound at residue glycine 251.

The protein belongs to the shikimate dehydrogenase family. Homodimer.

It catalyses the reaction shikimate + NADP(+) = 3-dehydroshikimate + NADPH + H(+). It functions in the pathway metabolic intermediate biosynthesis; chorismate biosynthesis; chorismate from D-erythrose 4-phosphate and phosphoenolpyruvate: step 4/7. Its function is as follows. Involved in the biosynthesis of the chorismate, which leads to the biosynthesis of aromatic amino acids. Catalyzes the reversible NADPH linked reduction of 3-dehydroshikimate (DHSA) to yield shikimate (SA). The sequence is that of Shikimate dehydrogenase (NADP(+)) from Streptomyces avermitilis (strain ATCC 31267 / DSM 46492 / JCM 5070 / NBRC 14893 / NCIMB 12804 / NRRL 8165 / MA-4680).